A 140-amino-acid chain; its full sequence is Large ribosomal subunit protein bL17 (140 aa).

The protein belongs to the bacterial ribosomal protein bL17 family. Part of the 50S ribosomal subunit. Contacts protein L32.

The sequence is that of Large ribosomal subunit protein bL17 from Gluconobacter oxydans (strain 621H) (Gluconobacter suboxydans).